A 221-amino-acid polypeptide reads, in one-letter code: Putative NAD(P)H nitroreductase YfkO (221 aa).

FMN contacts are provided by residues 15 to 17 (RHA) and 73 to 75 (QKQ). 157-162 (AAAQIG) contributes to the NAD(+) binding site. Residues 169-170 (EG) and Arg-211 contribute to the FMN site.

It belongs to the nitroreductase family. Monomer. FMN is required as a cofactor.

This Bacillus subtilis (strain 168) protein is Putative NAD(P)H nitroreductase YfkO (yfkO).